Reading from the N-terminus, the 373-residue chain is Queuine tRNA-ribosyltransferase (373 aa).

Aspartate 89 functions as the Proton acceptor in the catalytic mechanism. Residues 89–93, aspartate 143, glutamine 192, and glycine 220 each bind substrate; that span reads DSGGF. An RNA binding region spans residues 251-257; the sequence is GVGTPED. Aspartate 270 functions as the Nucleophile in the catalytic mechanism. Residues 275-279 are RNA binding; important for wobble base 34 recognition; it reads TRNAR. Residues cysteine 308, cysteine 310, cysteine 313, and histidine 339 each contribute to the Zn(2+) site.

Belongs to the queuine tRNA-ribosyltransferase family. As to quaternary structure, homodimer. Within each dimer, one monomer is responsible for RNA recognition and catalysis, while the other monomer binds to the replacement base PreQ1. The cofactor is Zn(2+).

It carries out the reaction 7-aminomethyl-7-carbaguanine + guanosine(34) in tRNA = 7-aminomethyl-7-carbaguanosine(34) in tRNA + guanine. It functions in the pathway tRNA modification; tRNA-queuosine biosynthesis. Its function is as follows. Catalyzes the base-exchange of a guanine (G) residue with the queuine precursor 7-aminomethyl-7-deazaguanine (PreQ1) at position 34 (anticodon wobble position) in tRNAs with GU(N) anticodons (tRNA-Asp, -Asn, -His and -Tyr). Catalysis occurs through a double-displacement mechanism. The nucleophile active site attacks the C1' of nucleotide 34 to detach the guanine base from the RNA, forming a covalent enzyme-RNA intermediate. The proton acceptor active site deprotonates the incoming PreQ1, allowing a nucleophilic attack on the C1' of the ribose to form the product. After dissociation, two additional enzymatic reactions on the tRNA convert PreQ1 to queuine (Q), resulting in the hypermodified nucleoside queuosine (7-(((4,5-cis-dihydroxy-2-cyclopenten-1-yl)amino)methyl)-7-deazaguanosine). This Aliarcobacter butzleri (strain RM4018) (Arcobacter butzleri) protein is Queuine tRNA-ribosyltransferase.